The following is an 86-amino-acid chain: Sodium channel neurotoxin MeuNaTxalpha-4 (86 aa).

The signal sequence occupies residues 1-19; sequence MNYLILISFALLVITGVES. One can recognise an LCN-type CS-alpha/beta domain in the interval 21-85; the sequence is RDAYIAKPHN…VPIRIPGKCH (65 aa). Cystine bridges form between Cys-31–Cys-84, Cys-35–Cys-57, Cys-43–Cys-67, and Cys-47–Cys-69. Arg-86 is a propeptide (removed by a carboxypeptidase).

This sequence belongs to the long (4 C-C) scorpion toxin superfamily. Sodium channel inhibitor family. Alpha subfamily. In terms of tissue distribution, expressed by the venom gland.

It is found in the secreted. Its function is as follows. Alpha toxins bind voltage-independently at site-3 of sodium channels (Nav) and inhibit the inactivation of the activated channels, thereby blocking neuronal transmission. This toxin inhibits inactivation of drosophila DmNav1 (EC(50)=130 nM). The polypeptide is Sodium channel neurotoxin MeuNaTxalpha-4 (Mesobuthus eupeus (Lesser Asian scorpion)).